We begin with the raw amino-acid sequence, 307 residues long: Secondary metabolism regulator LAE1 (307 aa).

The protein belongs to the methyltransferase superfamily. LaeA methyltransferase family. In terms of assembly, component of the heterotrimeric velvet complex composed of LAE1, VEL1 and VEL2; VEL1 acting as a bridging protein between LAE1 and VEL2.

It localises to the nucleus. The enzyme catalyses L-methionyl-[protein] + S-adenosyl-L-methionine = S-methyl-L-methionyl-[protein] + S-adenosyl-L-homocysteine. Functionally, methyltransferase that performs automethylation. No other methyl-accepting substrate has been identified yet. Component of the velvet transcription factor complex that acts as a global regulator for secondary metabolite gene expression. Controls the expression of the T-toxin gene cluster. Promotes oxidative stress tolerance and acts as a virulence factors during infection. Negatively regulate mycelial pigmentation and controls sexual development, as well as asexual development during vegetative growth. The chain is Secondary metabolism regulator LAE1 from Cochliobolus heterostrophus (strain C5 / ATCC 48332 / race O) (Southern corn leaf blight fungus).